Here is a 1351-residue protein sequence, read N- to C-terminus: Tripartite motif-containing protein 66 (1351 aa).

The B box-type 1; atypical zinc-finger motif lies at 105–150 (MARNCSECKEKRAAHILCTYCNRWLCSSCTEEHRHSPVPGGPFFPR). The Zn(2+) site is built by Cys109, Cys112, Cys133, His139, Cys169, His172, Cys192, and His197. The B box-type 2 zinc finger occupies 164–205 (DFTLYCPLHTQEVLKLFCETCDMLTCHSCLVVEHKEHRCRHV). A coiled-coil region spans residues 234–304 (AKQIEDRIFE…IMVLNRQFEH (71 aa)). 3 disordered regions span residues 542 to 608 (FGHH…CSQN), 663 to 730 (APVQ…VRKH), and 857 to 895 (CPLQ…DPSL). Residues 560–588 (QLPPPPPPLPHPPPPLPPPPQQPHPPLPP) are compositionally biased toward pro residues. Polar residues predominate over residues 664-676 (PVQSQSQEETLQA). Residues 872 to 884 (TGSSSSSGRTSGS) show a composition bias toward low complexity. The PxVxL motif signature appears at 995 to 999 (PYVRL). A disordered region spans residues 1067–1098 (TSLAGQRPPEVEGTSPEEHRLIPRTPGAKKGP). The PHD-type zinc-finger motif lies at 1105-1152 (EDFCAVCLNGGELLCCDRCPKVFHLSCHVPALLSFPGGEWVCTLCRSL). The region spanning 1176–1282 (GLSMYDQKKC…VFFEGWLKEI (107 aa)) is the Bromo domain. Residues 1289–1351 (AQPRQEDSDS…FRLANSISQV (63 aa)) form a disordered region.

Can form homodimers and heterodimers. Interacts with CBX5, CBX1 and CBX3 via PxVxL motif.

It is found in the nucleus. Its function is as follows. May function as transcription repressor; The repressive effects are mediated, at least in part, by recruitment of deacetylase activity. May play a role as negative regulator of postmeiotic genes acting through CBX3 complex formation and centromere association. The polypeptide is Tripartite motif-containing protein 66 (TRIM66) (Homo sapiens (Human)).